We begin with the raw amino-acid sequence, 177 residues long: Small ribosomal subunit protein eS10z (177 aa).

Residues 90-177 form a disordered region; that stretch reads TLKKSAKPGG…AAAPSGSGFP (88 aa). The segment covering 108–140 has biased composition (basic and acidic residues); it reads DRQRGPPRSDGDRPRFGDRDGYRGGPRGGDEKG. Over residues 141-150 the composition is skewed to low complexity; the sequence is GAPADFQPSF. Positions 151–165 are enriched in gly residues; the sequence is QGGGGRPGFGRGAGG. The span at 166-177 shows a compositional bias: low complexity; it reads YSAAAPSGSGFP.

Belongs to the eukaryotic ribosomal protein eS10 family.

It is found in the cytoplasm. The sequence is that of Small ribosomal subunit protein eS10z (RPS10A) from Arabidopsis thaliana (Mouse-ear cress).